Reading from the N-terminus, the 523-residue chain is MSDEQSSWRSKLLLICQQTRSSSESIHFAALKDHHARLQACESMEKAMKERCQKKITMSRRTKRGITHAGYLFEMPHNSVFEPECRGFYESCQQTEMASSDLQAPALEVSSTYPVQQAVKSRPEGQFPESRNNSTKKIDAQQYSSESSSQSGFGFRTAREQLIMDELKKKNRQATSEVDAVPTGMMNFRKKTLGGKRTVSSNFVSPVAQNDNSTSSRSSSIPPALAHLDSKMVDHILGESMHDFKPVAWEDIAGLESAKSTFLEAIIMPLRRPDLFTGVRCPPRGVLLFGPPGTGKTLIAKSIASQAKAKFFSINPSSLTSKWVGDAEKLVKTLFAVAAAHQPAIIFIDEVDSLLSKRSANENESTLRLKNEFLIHLDGAASNEEIRVLVIGATNRPQELDEAVRRRFVRRLYVPLPTREARQKIIEKLIHQVKHNLDVRQVIELAELTDGYSGADVDTLCRYASMAPLRSLTPDQMEVIETHQLPAVTMDDFKQALRVISKSVSSEDCKQFEAWNEIYGVRH.

The disordered stretch occupies residues 114–154 (PVQQAVKSRPEGQFPESRNNSTKKIDAQQYSSESSSQSGFG). A compositionally biased stretch (low complexity) spans 141-151 (QQYSSESSSQS). Residues Ala253 and 293–298 (GTGKTL) contribute to the ATP site.

Belongs to the AAA ATPase family. As to quaternary structure, hexamer. Mg(2+) serves as cofactor.

The enzyme catalyses ATP + H2O = ADP + phosphate + H(+). The chain is Fidgetin-like protein 1 from Drosophila melanogaster (Fruit fly).